The sequence spans 386 residues: Succinate--CoA ligase [ADP-forming] subunit beta (386 aa).

The ATP-grasp domain occupies 9–244 (KELFANYGVP…LDEEEPLEVE (236 aa)). ATP contacts are provided by residues K46, 53-55 (GRG), E99, L102, and E107. Residues N199 and D213 each contribute to the Mg(2+) site. Residues N264 and 321–323 (GIL) contribute to the substrate site.

Belongs to the succinate/malate CoA ligase beta subunit family. In terms of assembly, heterotetramer of two alpha and two beta subunits. Mg(2+) is required as a cofactor.

The enzyme catalyses succinate + ATP + CoA = succinyl-CoA + ADP + phosphate. It carries out the reaction GTP + succinate + CoA = succinyl-CoA + GDP + phosphate. It functions in the pathway carbohydrate metabolism; tricarboxylic acid cycle; succinate from succinyl-CoA (ligase route): step 1/1. Its function is as follows. Succinyl-CoA synthetase functions in the citric acid cycle (TCA), coupling the hydrolysis of succinyl-CoA to the synthesis of either ATP or GTP and thus represents the only step of substrate-level phosphorylation in the TCA. The beta subunit provides nucleotide specificity of the enzyme and binds the substrate succinate, while the binding sites for coenzyme A and phosphate are found in the alpha subunit. In Desulfatibacillum aliphaticivorans, this protein is Succinate--CoA ligase [ADP-forming] subunit beta.